A 329-amino-acid chain; its full sequence is Protein SPATA31F3 (329 aa).

Residues 11–31 (VGYSVYTYGSIFIIALIIWQV) form a helical membrane-spanning segment. Positions 58 to 85 (SDRATRAKRTSKEEAEKLQKLLDTMKSQ) form a coiled coil. 3 disordered regions span residues 149–184 (ADRSSELTYQDTRDVSLSSRFPQSQETDQQSTRSAT), 201–250 (QQLD…AAPT), and 288–329 (KPMT…KRNI). Phosphoserine occurs at positions 152 and 153. Composition is skewed to polar residues over residues 154–184 (ELTYQDTRDVSLSSRFPQSQETDQQSTRSAT) and 201–223 (QQLDPQGSKMTQDAKGLSSSSTD). Basic residues predominate over residues 232 to 242 (QKKRKKTKKLA). The segment covering 293-320 (EPEKTHSPVRDQAEGAEKKKKPECDLKA) has biased composition (basic and acidic residues).

It belongs to the SPATA31 family.

Its subcellular location is the membrane. The sequence is that of Protein SPATA31F3 from Rattus norvegicus (Rat).